We begin with the raw amino-acid sequence, 750 residues long: Amyloid-beta A4 precursor protein-binding family A member 2 (750 aa).

Disordered regions lie at residues 1 to 94 and 143 to 346; these read MAHR…PEEE and DSVG…IPET. Position 11 is a phosphoserine (S11). Residues 70-80 are compositionally biased toward polar residues; sequence GDSSSDYVNNT. Residues 81–94 show a composition bias toward acidic residues; the sequence is SEEEDYDEGLPEEE. The segment at 185-271 is STXBP1-binding; it reads HYCSSKESYQ…STEACPPSDT (87 aa). S209 carries the post-translational modification Phosphoserine. A compositionally biased stretch (acidic residues) spans 219-228; that stretch reads DLEEQEEDID. 2 stretches are compositionally biased toward polar residues: residues 238–248 and 332–344; these read LSMTSITSASE and SDLN…NNIP. Positions 367-556 constitute a PID domain; that stretch reads LIDGIIFAAN…IINTQEMYND (190 aa). 2 consecutive PDZ domains span residues 569–654 and 660–736; these read ELQL…NIVS and TVLI…MPAA.

Part of a multimeric complex containing STXBP1 and syntaxin-1. Binds to the cytoplasmic domain of amyloid-beta protein, and to the nuclear factor NF-kappa-B/p65 via its PDZ domain. Interacts with the N-terminal domain of NECAB3. In terms of tissue distribution, specifically expressed in neurons, predominantly of the cerebellum, hippocampus, and spinal cord. Lesser extent in neurons of the cerebral cortex and anterior thalmic nuclei.

Putative function in synaptic vesicle exocytosis by binding to STXBP1, an essential component of the synaptic vesicle exocytotic machinery. May modulate processing of the amyloid-beta precursor protein (APP) and hence formation of APP-beta. The chain is Amyloid-beta A4 precursor protein-binding family A member 2 (Apba2) from Mus musculus (Mouse).